The following is a 98-amino-acid chain: MPRSLKKGPFIEFKLEKRILDMNSKGEKKVVKTWSRSSMISPDFVGHTVAVHNGKTHVPVYVTENMVGHKLGEFAPTRLFRGHAGGKAEKGGSAPRKK.

The protein belongs to the universal ribosomal protein uS19 family.

In terms of biological role, protein S19 forms a complex with S13 that binds strongly to the 16S ribosomal RNA. This is Small ribosomal subunit protein uS19 from Chlorobaculum tepidum (strain ATCC 49652 / DSM 12025 / NBRC 103806 / TLS) (Chlorobium tepidum).